The chain runs to 190 residues: MPPRPRFDRRAPVRELPNINERIKYPQLRVVDSDGKQLGVIDRIKALEIAHQRGLDLVLVSEKANPPVCRIMDYGKYKFEQEKKAKETKKKSHQTEVKEVKMRYKIDKHDYDVRIGQAVRFLKSGDKVKCTVFFRGREIQHSNLAETLLLKMANDLEEQSEVQQRPKREGRNMIMFLSPRKTPLIKKEEG.

Belongs to the IF-3 family. As to quaternary structure, monomer.

It is found in the cytoplasm. Functionally, IF-3 binds to the 30S ribosomal subunit and shifts the equilibrium between 70S ribosomes and their 50S and 30S subunits in favor of the free subunits, thus enhancing the availability of 30S subunits on which protein synthesis initiation begins. This Prochlorococcus marinus subsp. pastoris (strain CCMP1986 / NIES-2087 / MED4) protein is Translation initiation factor IF-3.